A 312-amino-acid chain; its full sequence is Olfactory receptor 2M7 (312 aa).

Residues 1–25 (MAWENQTFNSDFLLLGIFNHSPTHT) are Extracellular-facing. An N-linked (GlcNAc...) asparagine glycan is attached at Asn-5. A helical transmembrane segment spans residues 26–49 (FLFFLVLAIFSVAFMGNSIMVLLI). At 50 to 57 (YLDTQLHT) the chain is on the cytoplasmic side. The chain crosses the membrane as a helical span at residues 58 to 79 (PMYFLLSQLSLMDLMLICTTVP). The Extracellular segment spans residues 80–100 (KMAFNYLSGSKSISMAGCATQ). Cys-97 and Cys-189 are disulfide-bonded. Residues 101-120 (IFFYISLLGSECFLLAVMSY) traverse the membrane as a helical segment. The Cytoplasmic portion of the chain corresponds to 121–139 (DRYTAICHPLRYTNLMRPK). The helical transmembrane segment at 140–158 (ICGLMTAFSWILGSTDGII) threads the bilayer. At 159–195 (DAVATFSFSYCGSREIAHFCCDFPSLLILSCNDTSIF) the chain is on the extracellular side. A helical transmembrane segment spans residues 196 to 219 (EEVIFICCIVMLVFPVAIIITSYA). Residues 220 to 236 (RVILAVIHMGSGEGRRK) lie on the Cytoplasmic side of the membrane. Residues 237–259 (AFTTCSSHLMVVGMYYGAGLFMC) form a helical membrane-spanning segment. The Extracellular portion of the chain corresponds to 260-272 (IQPTSHHSPMQDK). The chain crosses the membrane as a helical span at residues 273–292 (MVSVFYTIVTPMLNPLIYSL). The Cytoplasmic segment spans residues 293–311 (RNKEVTRALMKILGKGKSG).

This sequence belongs to the G-protein coupled receptor 1 family.

Its subcellular location is the cell membrane. Its function is as follows. Odorant receptor. The protein is Olfactory receptor 2M7 (OR2M7) of Homo sapiens (Human).